We begin with the raw amino-acid sequence, 284 residues long: 4-hydroxy-3-methylbut-2-enyl diphosphate reductase (284 aa).

Cys-12 contacts [4Fe-4S] cluster. (2E)-4-hydroxy-3-methylbut-2-enyl diphosphate is bound by residues His-40 and His-72. Residues His-40 and His-72 each contribute to the dimethylallyl diphosphate site. Residues His-40 and His-72 each contribute to the isopentenyl diphosphate site. Residue Cys-94 coordinates [4Fe-4S] cluster. His-122 is a (2E)-4-hydroxy-3-methylbut-2-enyl diphosphate binding site. His-122 is a binding site for dimethylallyl diphosphate. His-122 is an isopentenyl diphosphate binding site. Catalysis depends on Glu-124, which acts as the Proton donor. (2E)-4-hydroxy-3-methylbut-2-enyl diphosphate is bound at residue Thr-161. Cys-193 lines the [4Fe-4S] cluster pocket. (2E)-4-hydroxy-3-methylbut-2-enyl diphosphate is bound by residues Ser-221, Asn-223, and Ser-264. Positions 221, 223, and 264 each coordinate dimethylallyl diphosphate. Residues Ser-221, Asn-223, and Ser-264 each coordinate isopentenyl diphosphate.

This sequence belongs to the IspH family. [4Fe-4S] cluster serves as cofactor.

It carries out the reaction isopentenyl diphosphate + 2 oxidized [2Fe-2S]-[ferredoxin] + H2O = (2E)-4-hydroxy-3-methylbut-2-enyl diphosphate + 2 reduced [2Fe-2S]-[ferredoxin] + 2 H(+). The catalysed reaction is dimethylallyl diphosphate + 2 oxidized [2Fe-2S]-[ferredoxin] + H2O = (2E)-4-hydroxy-3-methylbut-2-enyl diphosphate + 2 reduced [2Fe-2S]-[ferredoxin] + 2 H(+). The protein operates within isoprenoid biosynthesis; dimethylallyl diphosphate biosynthesis; dimethylallyl diphosphate from (2E)-4-hydroxy-3-methylbutenyl diphosphate: step 1/1. It participates in isoprenoid biosynthesis; isopentenyl diphosphate biosynthesis via DXP pathway; isopentenyl diphosphate from 1-deoxy-D-xylulose 5-phosphate: step 6/6. Catalyzes the conversion of 1-hydroxy-2-methyl-2-(E)-butenyl 4-diphosphate (HMBPP) into a mixture of isopentenyl diphosphate (IPP) and dimethylallyl diphosphate (DMAPP). Acts in the terminal step of the DOXP/MEP pathway for isoprenoid precursor biosynthesis. The chain is 4-hydroxy-3-methylbut-2-enyl diphosphate reductase from Dehalococcoides mccartyi (strain CBDB1).